A 300-amino-acid chain; its full sequence is Type II methyltransferase M.Cfr9I (300 aa).

The disordered stretch occupies residues 109–129 (RGYRAPDKKNPARAMAVRPDT).

This sequence belongs to the N(4)/N(6)-methyltransferase family. N(4) subfamily.

It carries out the reaction a 2'-deoxycytidine in DNA + S-adenosyl-L-methionine = an N(4)-methyl-2'-deoxycytidine in DNA + S-adenosyl-L-homocysteine + H(+). Its function is as follows. A beta subtype methylase, recognizes the double-stranded sequence 5'-CCCGGG-3', methylates C-2 on both strands, and protects the DNA from cleavage by the Cfr9I endonuclease. The protein is Type II methyltransferase M.Cfr9I of Citrobacter freundii.